Reading from the N-terminus, the 40-residue chain is Conotoxin Bt14.16 (40 aa).

The propeptide occupies 1-18 (SDGRDAAVIYTESDVIAR). 2 disulfides stabilise this stretch: Cys-21–Cys-36 and Cys-24–Cys-29.

Belongs to the conotoxin A superfamily. As to expression, expressed by the venom duct.

It is found in the secreted. Its function is as follows. Probable neurotoxin with unknown target. Possibly targets ion channels. In Conus betulinus (Beech cone), this protein is Conotoxin Bt14.16.